Reading from the N-terminus, the 111-residue chain is Universal stress protein B (111 aa).

The next 2 helical transmembrane spans lie at 1–21 (MIST…NMAR) and 90–110 (FILT…LAIW).

The protein belongs to the universal stress protein B family.

The protein localises to the cell inner membrane. This is Universal stress protein B from Erwinia tasmaniensis (strain DSM 17950 / CFBP 7177 / CIP 109463 / NCPPB 4357 / Et1/99).